Reading from the N-terminus, the 622-residue chain is Iron transport multicopper oxidase fetC (622 aa).

Positions methionine 1 to alanine 20 are cleaved as a signal peptide. The Extracellular segment spans residues alanine 21–arginine 552. N-linked (GlcNAc...) asparagine glycans are attached at residues asparagine 28 and asparagine 74. Plastocyanin-like domains follow at residues valine 29–proline 144 and glutamate 154–lysine 301. Cu cation is bound by residues histidine 80 and histidine 82. 2 N-linked (GlcNAc...) asparagine glycosylation sites follow: asparagine 87 and asparagine 112. 2 residues coordinate Cu cation: histidine 124 and histidine 126. N-linked (GlcNAc...) asparagine glycosylation is found at asparagine 194, asparagine 198, asparagine 265, asparagine 292, and asparagine 358. A Plastocyanin-like 3 domain is found at lysine 362–proline 497. Cu cation contacts are provided by histidine 412, histidine 415, and histidine 417. N-linked (GlcNAc...) asparagine glycosylation is present at asparagine 428. Positions 478, 479, 480, and 484 each coordinate Cu cation. The chain crosses the membrane as a helical span at residues glycine 553 to tryptophan 573. The Cytoplasmic portion of the chain corresponds to tyrosine 574–threonine 622. Residues threonine 597 to threonine 622 are disordered.

Belongs to the multicopper oxidase family.

It localises to the cell membrane. Cell surface ferroxidase; part of the reductive iron assimilatory system (RIA), a siderophore-independent high affinity iron uptake mechanism. Required to oxidize Fe(2+) and release it from the transporter. This is Iron transport multicopper oxidase fetC from Epichloe festucae (strain E2368).